A 304-amino-acid chain; its full sequence is CD-NTase-associated protein 6 (304 aa).

An ATP-binding site is contributed by 75 to 80; sequence GTGKTS.

It belongs to the AAA ATPase family. As to quaternary structure, oligomerizes. Homohexamer. Forms a 1:1:6 CdnD:Cap7:Cap6 complex.

Its function is as follows. Regulates complex assembly in a CBASS antivirus system. CBASS (cyclic oligonucleotide-based antiphage signaling system) provides immunity against bacteriophage. The CD-NTase protein synthesizes cyclic nucleotides in response to infection; these serve as specific second messenger signals. The signals activate a diverse range of effectors, leading to bacterial cell death and thus abortive phage infection. A type III-C(AAA) CBASS system. In terms of biological role, prevents the CdnD:Cap7:Cap8 complex (also called CdnD:HORMA2:HORMA3) from synthesizing 2',3',3'-cyclic AMP-AMP-AMP (cAAA). Binds and disassembles an active CdnD:Cap7:Cap8 complex, inhibiting the complex's ability to synthesize cyclic nucleotide second messengers. An AAA+-ATPase remodeler, in the absence of foreign threat Cap6 probably maintains the Cap7 protein in an open, inactive state. Once activated (presumably by a bacteriophage protein) Cap7 binds to and activates its cognate CD-NTase (CdnD in this bacteria) to synthesize cAAA, a cyclic nucleotide second messenger. cAAA activates the NucC endonuclease which degrades all DNA in the infected cell, causing cell death and abortive phage infection. The sequence is that of CD-NTase-associated protein 6 from Pseudomonas aeruginosa.